The primary structure comprises 135 residues: NADPH-dependent 7-cyano-7-deazaguanine reductase (135 aa).

The Thioimide intermediate role is filled by Cys48. Catalysis depends on Asp55, which acts as the Proton donor. Residues 70 to 72 (LEL) and 89 to 90 (HE) each bind substrate.

Belongs to the GTP cyclohydrolase I family. QueF type 1 subfamily.

The protein localises to the cytoplasm. The catalysed reaction is 7-aminomethyl-7-carbaguanine + 2 NADP(+) = 7-cyano-7-deazaguanine + 2 NADPH + 3 H(+). The protein operates within tRNA modification; tRNA-queuosine biosynthesis. Catalyzes the NADPH-dependent reduction of 7-cyano-7-deazaguanine (preQ0) to 7-aminomethyl-7-deazaguanine (preQ1). This Prochlorococcus marinus (strain SARG / CCMP1375 / SS120) protein is NADPH-dependent 7-cyano-7-deazaguanine reductase.